The following is a 74-amino-acid chain: Protein YkgV (74 aa).

The polypeptide is Protein YkgV (Escherichia coli (strain K12)).